Consider the following 1037-residue polypeptide: Guanine nucleotide-binding protein G(s) subunit alpha isoforms XLas (1037 aa).

Disordered stretches follow at residues 1–105 (MGVR…MPFE), 185–224 (APGG…EETM), 283–588 (SPSQ…TSGC), and 640–666 (PLAE…KKRS). The segment covering 33–46 (APGAAAPGAGPSPA) has biased composition (low complexity). Positions 343–354 (PDKRERAERPPV) are enriched in basic and acidic residues. 2 stretches are compositionally biased toward low complexity: residues 361 to 408 (MEGA…GATP) and 416 to 521 (APAD…PASG). Residues 553–565 (GKSESSRGRRVYY) are compositionally biased toward basic and acidic residues. The span at 572–583 (SDDDSSGDESDD) shows a compositional bias: acidic residues. The span at 640-660 (PLAEKRRQMRKEALEKRAQKR) shows a compositional bias: basic and acidic residues. Positions 641–667 (LAEKRRQMRKEALEKRAQKRAEKKRSK) form a coiled coil. The G-alpha domain maps to 682–1037 (CTHRLLLLGA…RMHLRQYELL (356 aa)). The segment at 685 to 698 (RLLLLGAGESGKST) is G1 motif. 690 to 698 (GAGESGKST) provides a ligand contact to GTP. Ser-697 lines the Mg(2+) pocket. The disordered stretch occupies residues 711-734 (FNGEGGEEDPQAARSNSDGEKATK). Residues 730-756 (EKATKVQDIKNNLKEAIETIVAAMSNL) are a coiled coil. The tract at residues 839–847 (DLLRCRVLT) is G2 motif. GTP is bound by residues 840–847 (LLRCRVLT), 866–870 (DVGGQ), and 935–938 (NKQD). Arg-844 is subject to ADP-ribosylarginine; by cholera toxin. Mg(2+) is bound at residue Thr-847. A G3 motif region spans residues 862–871 (FHMFDVGGQR). The interval 931–938 (ILFLNKQD) is G4 motif. Ser-995 carries the post-translational modification Phosphoserine. The G5 motif stretch occupies residues 1007 to 1012 (TCAVDT). Ala-1009 contributes to the GTP binding site.

Belongs to the G-alpha family. G(s) subfamily. In terms of assembly, g proteins are composed of 3 units; alpha, beta and gamma. The alpha chain contains the guanine nucleotide binding site. Interacts through its N-terminal region with ALEX which is produced from the same locus in a different open reading frame. This interaction may inhibit its adenylyl cyclase-stimulating activity. Interacts with MAGED2.

The protein localises to the cell membrane. Its subcellular location is the apical cell membrane. The enzyme catalyses GTP + H2O = GDP + phosphate + H(+). In terms of biological role, guanine nucleotide-binding proteins (G proteins) function as transducers in numerous signaling pathways controlled by G protein-coupled receptors (GPCRs). The alpha chain contains the guanine nucleotide binding site and alternates between an active, GTP-bound state and an inactive, GDP-bound state. Signaling by an activated GPCR promotes GDP release and GTP binding. The alpha subunit has a low GTPase activity that converts bound GTP to GDP, thereby terminating the signal. Both GDP release and GTP hydrolysis are modulated by numerous regulatory proteins. Signaling involves the activation of adenylyl cyclases, resulting in increased levels of the signaling molecule cAMP. GNAS functions downstream of several GPCRs, including beta-adrenergic receptors. XLas isoforms interact with the same set of receptors as Gnas isoforms. In Homo sapiens (Human), this protein is Guanine nucleotide-binding protein G(s) subunit alpha isoforms XLas (GNAS).